The primary structure comprises 206 residues: MALRDLSSSLSSSSSPELHVLAVDDSFVDRKVIERLLKISACKVTTVESGTRALQYLGLDGDNGSSGLKDLKVNLIVTDYSMPGLTGYELLKKIKESSALREIPVVIMSSENIQPRIEQCMIEGAEEFLLKPVKLADVKRLKELIMRGGEAEEGKTKKLSPKRILQNDIDSSPSSSSTSSSSSSHDVSSLDDDTPSSKRIKLESRG.

Positions 19–146 constitute a Response regulatory domain; the sequence is HVLAVDDSFV…DVKRLKELIM (128 aa). Asp-79 is modified (4-aspartylphosphate). Residues 151–206 form a disordered region; the sequence is AEEGKTKKLSPKRILQNDIDSSPSSSSTSSSSSSHDVSSLDDDTPSSKRIKLESRG. Over residues 168–187 the composition is skewed to low complexity; that stretch reads DIDSSPSSSSTSSSSSSHDV.

Belongs to the ARR family. Type-A subfamily. Post-translationally, two-component system major event consists of a His-to-Asp phosphorelay between a sensor histidine kinase (HK) and a response regulator (RR). In plants, the His-to-Asp phosphorelay involves an additional intermediate named Histidine-containing phosphotransfer protein (HPt). This multistep phosphorelay consists of a His-Asp-His-Asp sequential transfer of a phosphate group between first a His and an Asp of the HK protein, followed by the transfer to a conserved His of the HPt protein and finally the transfer to an Asp in the receiver domain of the RR protein.

Its subcellular location is the nucleus. Functionally, functions as a response regulator involved in His-to-Asp phosphorelay signal transduction system. Phosphorylation of the Asp residue in the receiver domain activates the ability of the protein to promote the transcription of target genes. Type-A response regulators seem to act as negative regulators of the cytokinin signaling. This is Two-component response regulator ARR15 (ARR15) from Arabidopsis thaliana (Mouse-ear cress).